The chain runs to 319 residues: Ribonucleoside-diphosphate reductase small chain (319 aa).

Fe cation is bound by residues D70, E101, and H104. Y108 is a catalytic residue. Residues E163, E197, and H200 each coordinate Fe cation. Positions 313-319 (FSLDVDF) are interaction with R1.

It belongs to the ribonucleoside diphosphate reductase small chain family. In terms of assembly, interacts with RNR1/OPG080 subunit. Can interact with host RNR1 supunit. The cofactor is Fe cation.

The enzyme catalyses a 2'-deoxyribonucleoside 5'-diphosphate + [thioredoxin]-disulfide + H2O = a ribonucleoside 5'-diphosphate + [thioredoxin]-dithiol. Functionally, ribonucleoside-diphosphate reductase holoenzyme provides the precursors necessary for viral DNA synthesis. Allows virus growth in non-dividing cells. Catalyzes the biosynthesis of deoxyribonucleotides from the corresponding ribonucleotides. The chain is Ribonucleoside-diphosphate reductase small chain (OPG048) from Vaccinia virus (strain L-IVP) (VACV).